The sequence spans 747 residues: MQDDESSQIFMGPEGDQLPLVEMGSCKPEASDQWDCVLVADLQTLKIQKHAQKQLQFLENLESNGFHFKMLKDQKKVFFGIRADSDVIDKYRTLLMNPEDSGSRDEQSFNIATTRIRIVSFVVNNKLKPGDTFEDLVKDGVFETMFLLHKGEQNLKNIWARWRNMFEPQPIDEIREYFGEKVALYFTWLGWYTYMLVPAAVVGLIVFLSGFALFDSSQISKEICSANDIFMCPLGDHSHRYLRLSEMCTFAKLTHLFDNEGTVLFAIFMALWATVFLEIWKRKRAHEVQSWKLYEWDEEEEEMALELINSPHYKLKDHRHSYLSSTIILILSLFMICLMIGMAHVLVVYRVLAGALFSSLVKQQVTTAVVVTGAVVHYIIIVIMTKVNKYVALKLCKFEESGTFSEQERKFTVKFFILQFFAHFSSLIYIAFILGRINGHPGKSTRLAGLWKLEECHLSGCMMDLFIQMAIIMGLKQTLSNCVEYLCPLLAHKWRLMWASKHGHMSKDPELKEWQRNYYMNPINTFSLFDEFMEMMIQYGFTTIFVAAFPLAPLLALFSNLVEIRLDAIKMVRLQRRLVPRKAKDIGTWLQVLETIGVLAVIANGMVIAFTSEFIPRVVYKYHYGPCRTNRTFTDDCLTNYVNHSLSVFYTKHFNDHSRMEGQENVTVCRYRDYRNEHDYNLSEQFWFILAIRLTFVILFEHFALCIKLIAAWFVPDVPQKVKNEVLQEKYDRIRHRMRFSSRSTDV.

The Cytoplasmic portion of the chain corresponds to 1–193 (MQDDESSQIF…LYFTWLGWYT (193 aa)). Residues 194 to 214 (YMLVPAAVVGLIVFLSGFALF) traverse the membrane as a helical segment. Residues 215–259 (DSSQISKEICSANDIFMCPLGDHSHRYLRLSEMCTFAKLTHLFDN) are Extracellular-facing. At serine 245 the chain carries Phosphoserine; by PKA. The helical transmembrane segment at 260–280 (EGTVLFAIFMALWATVFLEIW) threads the bilayer. Residues 281–326 (KRKRAHEVQSWKLYEWDEEEEEMALELINSPHYKLKDHRHSYLSST) are Cytoplasmic-facing. Residues 327-347 (IILILSLFMICLMIGMAHVLV) form a helical membrane-spanning segment. The Extracellular segment spans residues 348 to 364 (VYRVLAGALFSSLVKQQ). Residues 365–385 (VTTAVVVTGAVVHYIIIVIMT) form a helical membrane-spanning segment. At 386 to 414 (KVNKYVALKLCKFEESGTFSEQERKFTVK) the chain is on the cytoplasmic side. The helical transmembrane segment at 415 to 435 (FFILQFFAHFSSLIYIAFILG) threads the bilayer. The Extracellular segment spans residues 436-543 (RINGHPGKST…EMMIQYGFTT (108 aa)). A helical transmembrane segment spans residues 544 to 564 (IFVAAFPLAPLLALFSNLVEI). The Cytoplasmic segment spans residues 565-595 (RLDAIKMVRLQRRLVPRKAKDIGTWLQVLET). Residues 596–616 (IGVLAVIANGMVIAFTSEFIP) form a helical membrane-spanning segment. At 617–695 (RVVYKYHYGP…FWFILAIRLT (79 aa)) the chain is on the extracellular side. N-linked (GlcNAc...) asparagine glycans are attached at residues asparagine 630, asparagine 643, asparagine 665, and asparagine 681. A helical transmembrane segment spans residues 696 to 716 (FVILFEHFALCIKLIAAWFVP). The Cytoplasmic portion of the chain corresponds to 717-747 (DVPQKVKNEVLQEKYDRIRHRMRFSSRSTDV).

It belongs to the anoctamin family. Phosphorylation on Ser-245 by cAMP-dependent protein kinase A (PKA)is essential for activation of its cation channel activity. As to expression, highly expressed in the olfactory epithelium, particularly in mature olfactory sensory neurons (at protein level). Expressed in the kidney (at protein level). Predominant expression seen in epithelial tissues. Highly expressed in the small intestine, colon and stomach.

The protein localises to the cell membrane. The protein resides in the endoplasmic reticulum. It carries out the reaction a 1,2-diacyl-sn-glycero-3-phospho-L-serine(in) = a 1,2-diacyl-sn-glycero-3-phospho-L-serine(out). The enzyme catalyses a beta-D-galactosyl-(1&lt;-&gt;1')-N-acylsphing-4-enine(out) = a beta-D-galactosyl-(1&lt;-&gt;1')-N-acylsphing-4-enine(in). The catalysed reaction is a 1,2-diacyl-sn-glycero-3-phosphocholine(in) = a 1,2-diacyl-sn-glycero-3-phosphocholine(out). It catalyses the reaction Ca(2+)(in) = Ca(2+)(out). It carries out the reaction Na(+)(in) = Na(+)(out). The enzyme catalyses K(+)(in) = K(+)(out). With respect to regulation, cation channel activity is activated via phosphorylation on Ser-245 by cAMP-dependent protein kinase A (PKA). Inhibited by NaCl. PKA-activated nonselective cation channel. Discriminates poorly among cations but is more permeable to Ca(2+) ions than to monovalent cations. Acts as a calcium-activated calcium permeable channel which may operate as a endoplasmic reticulum (ER) Ca(2+)-leak channel, reducing the loading of the ER Ca(2+) store. Regulates intracellular Ca2+ signals, ion channel activity, and cytokine release in the renal tissue. Plays an important role in olfaction, amplifying cAMP-evoked cyclic nucleotide-gated (CNG) channel currents in the olfactory sensory neurons. Has calcium-dependent phospholipid scramblase activity; scrambles phosphatidylserine, phosphatidylcholine and galactosylceramide. Does not exhibit calcium-activated chloride channel (CaCC) activity. Can inhibit the activity of ANO1. The protein is Anoctamin-9 of Mus musculus (Mouse).